The sequence spans 570 residues: Spermatocyte protein spe-26 (570 aa).

Kelch repeat units lie at residues 244–291 (VLII…IVDG), 293–338 (LYLF…SVVY), 341–393 (RIYV…VFEN), 395–440 (IYVS…NHGN), 442–487 (LLIV…SYKG), and 489–535 (LFSV…VAPN).

As to expression, testis, in both spermatogonial cells and spermatocytes.

The protein localises to the cytoplasm. The protein resides in the cytoskeleton. Its function is as follows. May play a role in the spermatocyte cytoskeleton, possibly interacting with actin. The sequence is that of Spermatocyte protein spe-26 (spe-26) from Caenorhabditis elegans.